A 151-amino-acid chain; its full sequence is 3-hydroxyacyl-[acyl-carrier-protein] dehydratase FabZ (151 aa).

Residue histidine 57 is part of the active site.

The protein belongs to the thioester dehydratase family. FabZ subfamily.

Its subcellular location is the cytoplasm. The catalysed reaction is a (3R)-hydroxyacyl-[ACP] = a (2E)-enoyl-[ACP] + H2O. Its function is as follows. Involved in unsaturated fatty acids biosynthesis. Catalyzes the dehydration of short chain beta-hydroxyacyl-ACPs and long chain saturated and unsaturated beta-hydroxyacyl-ACPs. The chain is 3-hydroxyacyl-[acyl-carrier-protein] dehydratase FabZ from Prochlorococcus marinus (strain SARG / CCMP1375 / SS120).